We begin with the raw amino-acid sequence, 687 residues long: Hemin receptor (687 aa).

Residues 1-28 form the signal peptide; the sequence is MPRSTSDRFRWSPLSLAIACTLSLAVQA. Residues 44–51 carry the TonB box motif; it reads DTMVVTAT. In terms of domain architecture, TBDR plug spans 56-167; sequence SSFEAPMMVT…LGGVISYETV (112 aa). The TBDR beta-barrel domain occupies 178-687; sequence NSGYRVYSAA…NAKFFVSYQW (510 aa). The disordered stretch occupies residues 319 to 338; that stretch reads ARPQGTPEEGRKQTTKGGKL. Over residues 326 to 338 the composition is skewed to basic and acidic residues; sequence EEGRKQTTKGGKL. The short motif at 670 to 687 is the TonB C-terminal box element; sequence QGVPQDGRNAKFFVSYQW.

The protein belongs to the TonB-dependent receptor family.

The protein localises to the cell outer membrane. Functionally, this protein is involved in the initial step of iron uptake by binding hemin, an iron chelatin siderophore that allows the bacteria to extract iron from the environment. In Yersinia enterocolitica, this protein is Hemin receptor (hemR).